The primary structure comprises 261 residues: Ribosomal RNA small subunit methyltransferase J (261 aa).

Residues 109–110, 125–126, and Asp-179 contribute to the S-adenosyl-L-methionine site; these read RD and ER.

The protein belongs to the methyltransferase superfamily. RsmJ family.

Its subcellular location is the cytoplasm. It carries out the reaction guanosine(1516) in 16S rRNA + S-adenosyl-L-methionine = N(2)-methylguanosine(1516) in 16S rRNA + S-adenosyl-L-homocysteine + H(+). In terms of biological role, specifically methylates the guanosine in position 1516 of 16S rRNA. The chain is Ribosomal RNA small subunit methyltransferase J from Pseudomonas paraeruginosa (strain DSM 24068 / PA7) (Pseudomonas aeruginosa (strain PA7)).